We begin with the raw amino-acid sequence, 74 residues long: Histone H1.C8/H1.M1 (74 aa).

The tract at residues 1–74 (MSDAAVPPKK…KAVKKAPKKK (74 aa)) is disordered. Positions 11–74 (ASPKKAAAKK…KAVKKAPKKK (64 aa)) are enriched in basic residues.

It is found in the nucleus. The protein resides in the chromosome. The protein is Histone H1.C8/H1.M1 of Trypanosoma cruzi.